We begin with the raw amino-acid sequence, 1208 residues long: Calmodulin-binding transcription activator 2 (1208 aa).

The CG-1 DNA-binding region spans arginine 30–cysteine 160. The Nuclear localization signal signature appears at asparagine 78–lysine 86. Disordered stretches follow at residues isoleucine 269 to glycine 328, valine 366 to alanine 418, and glutamine 437 to proline 507. Over residues proline 275–leucine 288 the composition is skewed to pro residues. Low complexity-rich tracts occupy residues serine 294 to serine 305 and threonine 319 to glycine 328. 2 stretches are compositionally biased toward pro residues: residues serine 371 to alanine 380 and threonine 464 to proline 476. The IPT/TIG domain occupies aspartate 544–arginine 622. 3 ANK repeats span residues arginine 717–leucine 750, phenylalanine 762–isoleucine 792, and leucine 796–valine 826. Disordered stretches follow at residues valine 826–isoleucine 881 and asparagine 908–proline 936. The span at proline 829–serine 853 shows a compositional bias: low complexity. IQ domains lie at leucine 1054–valine 1083 and methionine 1107–leucine 1136. Positions tyrosine 1144–phenylalanine 1166 are disordered.

It belongs to the CAMTA family. In terms of assembly, may interact with calmodulin.

The protein resides in the nucleus. Transcription activator. May act as tumor suppressor. This chain is Calmodulin-binding transcription activator 2 (Camta2), found in Mus musculus (Mouse).